The sequence spans 345 residues: C5a anaphylatoxin chemotactic receptor 1 (345 aa).

At 1–32 the chain is on the extracellular side; the sequence is MMVTVSYDYDYNSTFLPDGFVDNYVERLSFGD. Sulfotyrosine is present on residues tyrosine 9 and tyrosine 11. Asparagine 12 is a glycosylation site (N-linked (GlcNAc...) asparagine). The helical transmembrane segment at 33–59 threads the bilayer; it reads LVAVVIMVVVFLVGVPGNALVVWVTAC. At 60-64 the chain is on the cytoplasmic side; that stretch reads EARRH. A helical membrane pass occupies residues 65–88; that stretch reads INAIWFLNLAAADLLSCLALPILL. At 89–105 the chain is on the extracellular side; sequence VSTVHLNHWYFGDTACK. The cysteines at positions 104 and 183 are disulfide-linked. Residues 106 to 127 form a helical membrane-spanning segment; it reads VLPSLILLNMYTSILLLATISA. The Cytoplasmic portion of the chain corresponds to 128-148; that stretch reads DRLLLVLSPIWCQRFRGGCLA. The helical transmembrane segment at 149–169 threads the bilayer; sequence WTACGLAWVLALLLSSPSFLY. Residues 170–195 are Extracellular-facing; it reads RRTHNEHFSFKVYCVTDYGRDISKER. Residues 196-221 traverse the membrane as a helical segment; the sequence is AVALVRLLVGFIVPLITLTACYTFLL. Over 222 to 237 the chain is Cytoplasmic; the sequence is LRTWSRKATRSAKTVK. The helical transmembrane segment at 238-260 threads the bilayer; it reads VVVAVVSSFFVFWLPYQVTGILL. The Extracellular segment spans residues 261 to 277; sequence AWHSPNSATYRNTKALD. Residues 278 to 298 form a helical membrane-spanning segment; the sequence is AVCVAFAYINCCINPIIYVVA. At 299 to 345 the chain is on the cytoplasmic side; it reads GHGFQGRLLKSLPSVLRNVLTEESLDKRHQSFARSTVDTMPQKSESV. A phosphoserine mark is found at serine 309, serine 312, serine 322, serine 329, and serine 333.

The protein belongs to the G-protein coupled receptor 1 family. In terms of assembly, homodimer. May also form higher-order oligomers. Interacts (when phosphorylated) with ARRB1 and ARRB2; the interaction is associated with internalization of C5aR. Sulfation plays a critical role in the association of C5aR with C5a, but no significant role in the ability of the receptor to transduce a signal and mobilize calcium in response to a small peptide agonist. In terms of processing, phosphorylated on serine residues in response to C5a binding, resulting in internalization of the receptor and short-term desensitization to C5a. As to expression, expressed strongly in macrophages and spleen. Weak expression detected in lung, liver, brain, heart and kidney.

It is found in the cell membrane. The protein resides in the cytoplasmic vesicle. Receptor for the chemotactic and inflammatory peptide anaphylatoxin C5a. The ligand interacts with at least two sites on the receptor: a high-affinity site on the extracellular N-terminus, and a second site in the transmembrane region which activates downstream signaling events. Receptor activation stimulates chemotaxis, granule enzyme release, intracellular calcium release and superoxide anion production. In Cavia porcellus (Guinea pig), this protein is C5a anaphylatoxin chemotactic receptor 1 (C5AR1).